The chain runs to 277 residues: Diaminopimelate epimerase (277 aa).

Positions 13, 46, and 66 each coordinate substrate. Cysteine 75 acts as the Proton donor in catalysis. Substrate is bound by residues 76 to 77 (GN), asparagine 160, asparagine 193, and 211 to 212 (ER). The active-site Proton acceptor is cysteine 220. A substrate-binding site is contributed by 221–222 (GS).

It belongs to the diaminopimelate epimerase family. In terms of assembly, homodimer.

Its subcellular location is the cytoplasm. It carries out the reaction (2S,6S)-2,6-diaminopimelate = meso-2,6-diaminopimelate. Its pathway is amino-acid biosynthesis; L-lysine biosynthesis via DAP pathway; DL-2,6-diaminopimelate from LL-2,6-diaminopimelate: step 1/1. In terms of biological role, catalyzes the stereoinversion of LL-2,6-diaminopimelate (L,L-DAP) to meso-diaminopimelate (meso-DAP), a precursor of L-lysine and an essential component of the bacterial peptidoglycan. The protein is Diaminopimelate epimerase of Legionella pneumophila (strain Lens).